A 274-amino-acid polypeptide reads, in one-letter code: uncharacterized protein (274 aa).

The next 5 membrane-spanning stretches (helical) occupy residues S9–L29, W64–L84, L135–L155, M165–A185, and I219–G239.

This sequence belongs to the steroid 5-alpha reductase family.

The protein localises to the endoplasmic reticulum membrane. This is an uncharacterized protein from Schizosaccharomyces pombe (strain 972 / ATCC 24843) (Fission yeast).